Reading from the N-terminus, the 545-residue chain is DNA mismatch repair protein MutL (545 aa).

The segment at 517 to 545 (RRSGARGGGEARPRPQEESFPEAPLPREP) is disordered.

This sequence belongs to the DNA mismatch repair MutL/HexB family.

This protein is involved in the repair of mismatches in DNA. It is required for dam-dependent methyl-directed DNA mismatch repair. May act as a 'molecular matchmaker', a protein that promotes the formation of a stable complex between two or more DNA-binding proteins in an ATP-dependent manner without itself being part of a final effector complex. The sequence is that of DNA mismatch repair protein MutL from Thermus thermophilus (strain ATCC 27634 / DSM 579 / HB8).